Reading from the N-terminus, the 261-residue chain is Gap junction beta-6 protein (261 aa).

The Cytoplasmic portion of the chain corresponds to 1–22 (MDWGTLHTFVGGVNKHSTSIGK). A helical transmembrane segment spans residues 23 to 45 (VWVTVLFVFRVMILVVAAQEVWG). Over 46-75 (DEQEDFVCNTLQPGCRNVCYDHFFPVSHIR) the chain is Extracellular. Residues 76-98 (LWALQLIFVSTPALLVAMHVAYY) traverse the membrane as a helical segment. Residues 99–131 (RHEAARRFRRGETRSEFKDLEDIKRQKVRIEGS) are Cytoplasmic-facing. A helical membrane pass occupies residues 132-154 (LWWTYTSSIFFRIVFEAAFMYVF). Residues 155–192 (YFLYNGYHLPWVLKCGIQPCPNLVDCFISRPTEKTVFT) lie on the Extracellular side of the membrane. The chain crosses the membrane as a helical span at residues 193-215 (IFMISASVICMLLNVAELCYLLL). At 216-261 (KVCFRRSKRAQTQKAPPNHALKESKQNEMNELISEGGQNAITGFPS) the chain is on the cytoplasmic side.

This sequence belongs to the connexin family. Beta-type (group I) subfamily. As to quaternary structure, a connexon is composed of a hexamer of connexins. Interacts with CNST.

Its subcellular location is the cell membrane. It is found in the cell junction. The protein resides in the gap junction. Its function is as follows. One gap junction consists of a cluster of closely packed pairs of transmembrane channels, the connexons, through which materials of low MW diffuse from one cell to a neighboring cell. The polypeptide is Gap junction beta-6 protein (GJB6) (Bos taurus (Bovine)).